We begin with the raw amino-acid sequence, 618 residues long: Beta-xylosidase (618 aa).

2 disordered regions span residues 76–100 (ERDRYTTDESDSGSSERHSVQQEES) and 463–509 (LEPQ…PPIQ).

It belongs to the glycosyl hydrolase 52 family.

The protein resides in the secreted. The catalysed reaction is Hydrolysis of (1-&gt;4)-beta-D-xylans, to remove successive D-xylose residues from the non-reducing termini.. The protein operates within glycan degradation; xylan degradation. The sequence is that of Beta-xylosidase (xylA) from Geobacillus stearothermophilus (Bacillus stearothermophilus).